Here is a 296-residue protein sequence, read N- to C-terminus: Ribosomal RNA small subunit methyltransferase A (296 aa).

S-adenosyl-L-methionine contacts are provided by Asn28, Leu30, Gly55, Glu77, Asp103, and Asn122.

Belongs to the class I-like SAM-binding methyltransferase superfamily. rRNA adenine N(6)-methyltransferase family. RsmA subfamily.

It localises to the cytoplasm. The catalysed reaction is adenosine(1518)/adenosine(1519) in 16S rRNA + 4 S-adenosyl-L-methionine = N(6)-dimethyladenosine(1518)/N(6)-dimethyladenosine(1519) in 16S rRNA + 4 S-adenosyl-L-homocysteine + 4 H(+). Specifically dimethylates two adjacent adenosines (A1518 and A1519) in the loop of a conserved hairpin near the 3'-end of 16S rRNA in the 30S particle. May play a critical role in biogenesis of 30S subunits. In Sinorhizobium fredii (strain NBRC 101917 / NGR234), this protein is Ribosomal RNA small subunit methyltransferase A.